The primary structure comprises 258 residues: Cytochrome b-c1 complex subunit Rieske-1, mitochondrial (258 aa).

The N-terminal 46 residues, 1–46, are a transit peptide targeting the mitochondrion; sequence WPVRSAAPSSSAFISANHFSSDDDSSSPRSISPSLASVFLHHTRGF. The Mitochondrial matrix segment spans residues 47 to 95; sequence SSNSVSPAHDMGLVPDLPPTVAAIKNPTSKIVYDEHNHERYPPGDPSKR. Residues 96 to 118 form a helical membrane-spanning segment; that stretch reads AFAYFVLTGGRFVYASLMRLLIL. Residues 119 to 258 are Mitochondrial intermembrane-facing; the sequence is KFVLSMSASK…FLEENKLLIG (140 aa). One can recognise a Rieske domain in the interval 161–256; that stretch reads RRRTEDDISL…YSFLEENKLL (96 aa). [2Fe-2S] cluster-binding residues include Cys-201, His-203, Cys-220, and His-223. A disulfide bridge connects residues Cys-206 and Cys-222.

Belongs to the Rieske iron-sulfur protein family. As to quaternary structure, component of the ubiquinol-cytochrome c oxidoreductase (cytochrome b-c1 complex, complex III, CIII), a multisubunit enzyme composed of 3 respiratory subunits cytochrome b, cytochrome c1 and Rieske protein, 2 core protein subunits, and several low-molecular weight protein subunits. The complex exists as an obligatory dimer and forms supercomplexes (SCs) in the inner mitochondrial membrane with cytochrome c oxidase (complex IV, CIV). It depends on [2Fe-2S] cluster as a cofactor.

It is found in the mitochondrion inner membrane. The enzyme catalyses a quinol + 2 Fe(III)-[cytochrome c](out) = a quinone + 2 Fe(II)-[cytochrome c](out) + 2 H(+)(out). Its function is as follows. Component of the ubiquinol-cytochrome c oxidoreductase, a multisubunit transmembrane complex that is part of the mitochondrial electron transport chain which drives oxidative phosphorylation. The respiratory chain contains 3 multisubunit complexes succinate dehydrogenase (complex II, CII), ubiquinol-cytochrome c oxidoreductase (cytochrome b-c1 complex, complex III, CIII) and cytochrome c oxidase (complex IV, CIV), that cooperate to transfer electrons derived from NADH and succinate to molecular oxygen, creating an electrochemical gradient over the inner membrane that drives transmembrane transport and the ATP synthase. The cytochrome b-c1 complex catalyzes electron transfer from ubiquinol to cytochrome c, linking this redox reaction to translocation of protons across the mitochondrial inner membrane, with protons being carried across the membrane as hydrogens on the quinol. In the process called Q cycle, 2 protons are consumed from the matrix, 4 protons are released into the intermembrane space and 2 electrons are passed to cytochrome c. The Rieske protein is a catalytic core subunit containing a [2Fe-2S] iron-sulfur cluster. It cycles between 2 conformational states during catalysis to transfer electrons from the quinol bound in the Q(0) site in cytochrome b to cytochrome c1. The protein is Cytochrome b-c1 complex subunit Rieske-1, mitochondrial of Nicotiana tabacum (Common tobacco).